A 266-amino-acid chain; its full sequence is Dihydropteroate synthase (266 aa).

The region spanning 12–260 (AAIMGILNVT…DVKANQDIVA (249 aa)) is the Pterin-binding domain. Asn-19 lines the Mg(2+) pocket. (7,8-dihydropterin-6-yl)methyl diphosphate-binding positions include Thr-59, Asp-93, Asn-112, Asp-176, Lys-212, and 248-250 (RVH).

This sequence belongs to the DHPS family. In terms of assembly, homodimer or homotrimer. Mg(2+) is required as a cofactor.

It carries out the reaction (7,8-dihydropterin-6-yl)methyl diphosphate + 4-aminobenzoate = 7,8-dihydropteroate + diphosphate. Its pathway is cofactor biosynthesis; tetrahydrofolate biosynthesis; 7,8-dihydrofolate from 2-amino-4-hydroxy-6-hydroxymethyl-7,8-dihydropteridine diphosphate and 4-aminobenzoate: step 1/2. Catalyzes the condensation of para-aminobenzoate (pABA) with 6-hydroxymethyl-7,8-dihydropterin diphosphate (DHPt-PP) to form 7,8-dihydropteroate (H2Pte), the immediate precursor of folate derivatives. The polypeptide is Dihydropteroate synthase (folP) (Streptococcus pyogenes serotype M18 (strain MGAS8232)).